The sequence spans 201 residues: uncharacterized protein (201 aa).

As to quaternary structure, interacts with the chaperones HSP82 and HSC82.

This is an uncharacterized protein from Saccharomyces cerevisiae (strain ATCC 204508 / S288c) (Baker's yeast).